Reading from the N-terminus, the 23-residue chain is Paralytic peptide 1 (23 aa).

Cys7 and Cys19 form a disulfide bridge.

Belongs to the GBP/PSP1/paralytic peptide family. As to expression, hemolymph.

Its function is as follows. Causes rapid, rigid paralysis when injected into Lepidopteran larvae. The physiological role may be to reduce hemolymph loss following injury and promote wound healing. The polypeptide is Paralytic peptide 1 (Spodoptera exigua (Beet armyworm)).